The chain runs to 272 residues: Alkaline ceramidase (272 aa).

A run of 2 helical transmembrane segments spans residues 34-54 (FANT…IMLL) and 61-81 (VNGG…ASTY). Position 83 (His83) interacts with Zn(2+). 4 helical membrane-spanning segments follow: residues 96 to 116 (LSLV…MKWF), 124 to 144 (LTVV…LCFL), 148 to 168 (LNAI…RYEG), and 183 to 203 (ILAL…LCDF). Zn(2+) contacts are provided by His213 and His217. Residues 214 to 234 (ALFHLLAGLAGYTIFIMFSMI) traverse the membrane as a helical segment. The N-linked (GlcNAc...) asparagine glycan is linked to Asn256.

This sequence belongs to the alkaline ceramidase family. Zn(2+) is required as a cofactor.

The protein resides in the membrane. It carries out the reaction an N-acylsphing-4-enine + H2O = sphing-4-enine + a fatty acid. Hydrolyzes the sphingolipid ceramide into sphingosine and free fatty acid. The chain is Alkaline ceramidase from Caenorhabditis briggsae.